The primary structure comprises 610 residues: MSEVFDSKSFLKTVTSQPGVYRMYDASGTVIYVGKAKDLKKRLSSYFRSNLASRKTEALVAQIHNIDVTVTHTETEALLLEHNYIKLYQPRYNVLLRDDKSYPYIFLSGDTHPRLAIHRGAKHAKGEYFGPFPNGYAVRETLALLQKIFPIRQCENSVYRNRSRPCLQYQIGRCLGPCVEGLVSEEDYAQQVEYVRLFLAGKDDQVINQLVSRMEQASQNLAFEEAARLRDQIQAVRRVTEKQFVSNNGDDLDVIGVAFESGMACLHVLFIRQGKVLGSRSYYPKVPNGTELAEVVETFVGQFYLQGSQMRTLPGEILLDFPLTTPELLAETLTEIAGRRVNVQTRPRGDRARYLKLARTNAATALTTRLSQQSTISQRLTALAQALHLPEIKRMECFDISHTMGEQTVASCVVFDANGPLRAEYRRYNITGITPGDDYAAMNQVLRRRYGKAIEESKVPDIILIDGGKGQLGQAKSVFAELDVPWDKHHPLLLGVAKGSDRKAGLETLFLEPEGEGFALPPDSPALHVIQHIRDESHNHAITGHRKKRAKVKNTSTLETIEGIGPKRRQMLLKYMGGLQPLLNASVEEIAKVPGISQALAEKIYYSLKH.

A GIY-YIG domain is found at 16-94 (SQPGVYRMYD…IKLYQPRYNV (79 aa)). The UVR domain maps to 204-239 (DQVINQLVSRMEQASQNLAFEEAARLRDQIQAVRRV).

It belongs to the UvrC family. In terms of assembly, interacts with UvrB in an incision complex.

It is found in the cytoplasm. Its function is as follows. The UvrABC repair system catalyzes the recognition and processing of DNA lesions. UvrC both incises the 5' and 3' sides of the lesion. The N-terminal half is responsible for the 3' incision and the C-terminal half is responsible for the 5' incision. In Cronobacter sakazakii (strain ATCC BAA-894) (Enterobacter sakazakii), this protein is UvrABC system protein C.